Reading from the N-terminus, the 148-residue chain is uncharacterized protein (148 aa).

Residues 97–112 (KKLDEQRMPGKPKNTE) show a composition bias toward basic and acidic residues. The interval 97 to 126 (KKLDEQRMPGKPKNTEGSKSTIRKKANVGN) is disordered.

This is an uncharacterized protein from Caenorhabditis elegans.